We begin with the raw amino-acid sequence, 133 residues long: Large-conductance mechanosensitive channel (133 aa).

The next 2 helical transmembrane spans lie at 10–30 and 76–96; these read FAMK…TAFG and GNFI…FCVI.

It belongs to the MscL family. Homopentamer.

The protein localises to the cell inner membrane. In terms of biological role, channel that opens in response to stretch forces in the membrane lipid bilayer. May participate in the regulation of osmotic pressure changes within the cell. The polypeptide is Large-conductance mechanosensitive channel (Campylobacter curvus (strain 525.92)).